The primary structure comprises 479 residues: ATP synthase subunit beta (479 aa).

An ATP-binding site is contributed by 168-175 (GGAGVGKT).

This sequence belongs to the ATPase alpha/beta chains family. As to quaternary structure, F-type ATPases have 2 components, CF(1) - the catalytic core - and CF(0) - the membrane proton channel. CF(1) has five subunits: alpha(3), beta(3), gamma(1), delta(1), epsilon(1). CF(0) has three main subunits: a(1), b(2) and c(9-12). The alpha and beta chains form an alternating ring which encloses part of the gamma chain. CF(1) is attached to CF(0) by a central stalk formed by the gamma and epsilon chains, while a peripheral stalk is formed by the delta and b chains.

Its subcellular location is the cell membrane. It catalyses the reaction ATP + H2O + 4 H(+)(in) = ADP + phosphate + 5 H(+)(out). Its function is as follows. Produces ATP from ADP in the presence of a proton gradient across the membrane. The catalytic sites are hosted primarily by the beta subunits. This Parafrankia sp. (strain EAN1pec) protein is ATP synthase subunit beta.